Reading from the N-terminus, the 133-residue chain is Salivary cystatin-L (133 aa).

The N-terminal stretch at 1–19 (MTSTFALVLLLGGMAVCVA) is a signal peptide. The region spanning 30-118 (ANHQANPEFL…RTCTTVVFEN (89 aa)) is the Cystatin domain. Disulfide bonds link Cys89–Cys100 and Cys111–Cys130.

This sequence belongs to the cystatin family. As to quaternary structure, monomer. Can form homodimers in vitro, but probably not in vivo. Homodimers are predicted to be inactive; dimerization disrupts the interaction with target proteases. Detected in saliva (at protein level). Detected in salivary gland and midgut.

The protein localises to the secreted. Functionally, contributes to the suppression of the host's immune response to tick salivary proteins and is important for successful feeding on hosts. Inhibitor of cysteine proteinases. Inhibits host papain and cathepsin L (CTSL) (in vitro). Inhibits host cathepsin S (CTSS) (in vitro). Inhibits host CTSV and CTSC, but to a lesser degree (in vitro). Inhibits host immune responses via its inhibition of host cathepsins. Inhibits differentiation of host dendritic cells. Inhibits proliferation of host T-cells in response to antigen stimulus. Down-regulates IL1B production by host mast cells, and this then leads to impaired activation of IL1R1, resulting in decreased IL9 production. Inhibits host inflammatory reactions and recruitment of host neutrophils. Attenuates IFN-beta (IFNB1)-triggered JAK/STAT signaling pathway in mouse dendritic cells. In terms of biological role, (Microbial infection) Down-regulates TLR2-mediated host responses to infection by Borrelia burgdorferi and the production of the chemokine CCL3 by host dendritic cells. Down-regulates host responses to infection by B.burgdorferi and the production of IFNB1 by host dendritic cells. In Ixodes scapularis (Black-legged tick), this protein is Salivary cystatin-L.